We begin with the raw amino-acid sequence, 360 residues long: Protein YIM1-1 (360 aa).

This sequence belongs to the YIM1 family.

It localises to the lipid droplet. The protein localises to the mitochondrion. This chain is Protein YIM1-1 (YIM1-1), found in Lachancea thermotolerans (strain ATCC 56472 / CBS 6340 / NRRL Y-8284) (Yeast).